We begin with the raw amino-acid sequence, 741 residues long: Catalase-peroxidase (741 aa).

The N-terminal stretch at 1-23 (MLKKIVTALGMSGMLLASSNAIA) is a signal peptide. Positions 102 to 223 (WHDAGTYRIY…YAATQMGLIY (122 aa)) form a cross-link, tryptophyl-tyrosyl-methioninium (Trp-Tyr) (with M-249). Residue His103 is the Proton acceptor of the active site. Positions 223-249 (YVNPEGPDGKPDIKGAASEIRQAFRAM) form a cross-link, tryptophyl-tyrosyl-methioninium (Tyr-Met) (with W-102). His264 is a heme b binding site.

It belongs to the peroxidase family. Peroxidase/catalase subfamily. As to quaternary structure, homodimer or homotetramer. Heme b serves as cofactor. Formation of the three residue Trp-Tyr-Met cross-link is important for the catalase, but not the peroxidase activity of the enzyme.

It catalyses the reaction H2O2 + AH2 = A + 2 H2O. It carries out the reaction 2 H2O2 = O2 + 2 H2O. Functionally, bifunctional enzyme with both catalase and broad-spectrum peroxidase activity. This Francisella tularensis subsp. tularensis (strain WY96-3418) protein is Catalase-peroxidase.